Reading from the N-terminus, the 465-residue chain is 3-isopropylmalate dehydratase large subunit (465 aa).

Positions 347, 407, and 410 each coordinate [4Fe-4S] cluster.

This sequence belongs to the aconitase/IPM isomerase family. LeuC type 1 subfamily. In terms of assembly, heterodimer of LeuC and LeuD. Requires [4Fe-4S] cluster as cofactor.

It carries out the reaction (2R,3S)-3-isopropylmalate = (2S)-2-isopropylmalate. It functions in the pathway amino-acid biosynthesis; L-leucine biosynthesis; L-leucine from 3-methyl-2-oxobutanoate: step 2/4. Functionally, catalyzes the isomerization between 2-isopropylmalate and 3-isopropylmalate, via the formation of 2-isopropylmaleate. The chain is 3-isopropylmalate dehydratase large subunit from Tolumonas auensis (strain DSM 9187 / NBRC 110442 / TA 4).